The sequence spans 319 residues: Phospho-N-acetylmuramoyl-pentapeptide-transferase (319 aa).

10 helical membrane passes run 5–25 (LIPF…FIGF), 51–71 (TMGG…VLIW), 79–99 (AWIL…DDGI), 116–136 (LGQI…HFAF), 149–169 (SFLF…AVNL), 172–192 (GLDG…AWIA), 197–217 (NWVI…FFIF), 224–244 (IFMG…VSIF), 252–272 (LLIG…VISF), and 299–319 (VDIV…IIWG).

This sequence belongs to the glycosyltransferase 4 family. MraY subfamily. Requires Mg(2+) as cofactor.

It localises to the cell membrane. The catalysed reaction is UDP-N-acetyl-alpha-D-muramoyl-L-alanyl-gamma-D-glutamyl-L-lysyl-D-alanyl-D-alanine + di-trans,octa-cis-undecaprenyl phosphate = Mur2Ac(oyl-L-Ala-gamma-D-Glu-L-Lys-D-Ala-D-Ala)-di-trans,octa-cis-undecaprenyl diphosphate + UMP. The protein operates within cell wall biogenesis; peptidoglycan biosynthesis. In terms of biological role, catalyzes the initial step of the lipid cycle reactions in the biosynthesis of the cell wall peptidoglycan: transfers peptidoglycan precursor phospho-MurNAc-pentapeptide from UDP-MurNAc-pentapeptide onto the lipid carrier undecaprenyl phosphate, yielding undecaprenyl-pyrophosphoryl-MurNAc-pentapeptide, known as lipid I. The sequence is that of Phospho-N-acetylmuramoyl-pentapeptide-transferase from Lactobacillus johnsonii (strain CNCM I-12250 / La1 / NCC 533).